The primary structure comprises 144 residues: Large ribosomal subunit protein uL16 (144 aa).

Residues 1–16 (MLIPKRVKYRKQHRGR) show a composition bias toward basic residues. The segment at 1–23 (MLIPKRVKYRKQHRGRPGGGMAK) is disordered.

Belongs to the universal ribosomal protein uL16 family. As to quaternary structure, part of the 50S ribosomal subunit.

Functionally, binds 23S rRNA and is also seen to make contacts with the A and possibly P site tRNAs. The sequence is that of Large ribosomal subunit protein uL16 from Pelotomaculum thermopropionicum (strain DSM 13744 / JCM 10971 / SI).